The primary structure comprises 474 residues: UDP-N-acetylmuramate--L-alanine ligase (474 aa).

An ATP-binding site is contributed by 122–128 (GTHGKTT).

This sequence belongs to the MurCDEF family.

The protein localises to the cytoplasm. It carries out the reaction UDP-N-acetyl-alpha-D-muramate + L-alanine + ATP = UDP-N-acetyl-alpha-D-muramoyl-L-alanine + ADP + phosphate + H(+). It functions in the pathway cell wall biogenesis; peptidoglycan biosynthesis. In terms of biological role, cell wall formation. The sequence is that of UDP-N-acetylmuramate--L-alanine ligase from Saccharophagus degradans (strain 2-40 / ATCC 43961 / DSM 17024).